The sequence spans 521 residues: GMP synthase [glutamine-hydrolyzing] (521 aa).

Positions 5-197 (KILILDFGSQ…VLDICGAQPG (193 aa)) constitute a Glutamine amidotransferase type-1 domain. The active-site Nucleophile is cysteine 81. Active-site residues include histidine 171 and glutamate 173. The region spanning 198 to 390 (WTMPNYIEEA…LGLPREMVYR (193 aa)) is the GMPS ATP-PPase domain. 225-231 (SGGVDSS) is an ATP binding site.

Homodimer.

It catalyses the reaction XMP + L-glutamine + ATP + H2O = GMP + L-glutamate + AMP + diphosphate + 2 H(+). It functions in the pathway purine metabolism; GMP biosynthesis; GMP from XMP (L-Gln route): step 1/1. In terms of biological role, catalyzes the synthesis of GMP from XMP. The protein is GMP synthase [glutamine-hydrolyzing] of Neisseria gonorrhoeae (strain ATCC 700825 / FA 1090).